Reading from the N-terminus, the 90-residue chain is MNNVFKAISDPTRRKILDLLKGGDMTAGDIAEHFNISKPSISHHLNILKQAEVISDHRKGQFIYYSLNTTVLQDSINWMLNFINKGDNDL.

The HTH arsR-type domain maps to 1-87; that stretch reads MNNVFKAISD…WMLNFINKGD (87 aa). A DNA-binding region (H-T-H motif) is located at residues 39 to 62; the sequence is PSISHHLNILKQAEVISDHRKGQF.

It localises to the cytoplasm. Functionally, represses the transcription of the sdpIR operon and of several other operons that probably contribute to delaying commitment to sporulation. This chain is Transcriptional repressor SdpR (sdpR), found in Bacillus subtilis (strain 168).